The chain runs to 312 residues: Olfactory receptor 1F1 (312 aa).

The Extracellular portion of the chain corresponds to 1–25; it reads MSGTNQSSVSEFLLLGLSRQPQQQH. N-linked (GlcNAc...) asparagine glycosylation is present at N5. The chain crosses the membrane as a helical span at residues 26–49; that stretch reads LLFVFFLSMYLATVLGNLLIILSV. Residues 50 to 57 lie on the Cytoplasmic side of the membrane; the sequence is SIDSCLHT. The chain crosses the membrane as a helical span at residues 58 to 79; that stretch reads PMYFFLSNLSFVDICFSFTTVP. Topologically, residues 80 to 100 are extracellular; the sequence is KMLANHILETQTISFCGCLTQ. Residues C97 and C189 are joined by a disulfide bond. Residues 101–120 form a helical membrane-spanning segment; sequence MYFVFMFVDMDNFLLAVMAY. Over 121–139 the chain is Cytoplasmic; it reads DHFVAVCHPLHYTAKMTHQ. The helical transmembrane segment at 140-158 threads the bilayer; that stretch reads LCALLVAGLWVVANLNVLL. At 159–196 the chain is on the extracellular side; the sequence is HTLLMAPLSFCADNAITHFFCDVTPLLKLSCSDTHLNE. Residues 197–219 form a helical membrane-spanning segment; it reads VIILSEGALVMITPFLCILASYM. The Cytoplasmic portion of the chain corresponds to 220-236; it reads HITCTVLKVPSTKGRWK. The helical transmembrane segment at 237-259 threads the bilayer; the sequence is AFSTCGSHLAVVLLFYSTIIAVY. The Extracellular portion of the chain corresponds to 260–272; sequence FNPLSSHSAEKDT. A helical membrane pass occupies residues 273–292; it reads MATVLYTVVTPMLNPFIYSL. The Cytoplasmic portion of the chain corresponds to 293 to 312; it reads RNRYLKGALKKVVGRVVFSV.

This sequence belongs to the G-protein coupled receptor 1 family.

The protein localises to the cell membrane. Odorant receptor. This Homo sapiens (Human) protein is Olfactory receptor 1F1 (OR1F1).